The sequence spans 98 residues: DNA-directed RNA polymerase subunit omega (98 aa).

The protein belongs to the RNA polymerase subunit omega family. The RNAP catalytic core consists of 2 alpha, 1 beta, 1 beta' and 1 omega subunit. When a sigma factor is associated with the core the holoenzyme is formed, which can initiate transcription.

The enzyme catalyses RNA(n) + a ribonucleoside 5'-triphosphate = RNA(n+1) + diphosphate. Its function is as follows. Promotes RNA polymerase assembly. Latches the N- and C-terminal regions of the beta' subunit thereby facilitating its interaction with the beta and alpha subunits. The chain is DNA-directed RNA polymerase subunit omega from Tropheryma whipplei (strain Twist) (Whipple's bacillus).